The primary structure comprises 363 residues: Phospho-N-acetylmuramoyl-pentapeptide-transferase (363 aa).

Transmembrane regions (helical) follow at residues 15 to 33 (FTTL…SFIF), 82 to 102 (NTPT…LLIV), 106 to 126 (FYSM…IIGF), 147 to 167 (FILQ…NGYI), 183 to 203 (IVIF…VNLT), 207 to 227 (DGLA…EIFI), 233 to 253 (LIIY…FLKF), 260 to 280 (IFMG…ISIL), 285 to 305 (FTLF…IIQV), and 341 to 361 (IVEN…VLKI).

This sequence belongs to the glycosyltransferase 4 family. MraY subfamily. Requires Mg(2+) as cofactor.

The protein localises to the cell inner membrane. The catalysed reaction is UDP-N-acetyl-alpha-D-muramoyl-L-alanyl-gamma-D-glutamyl-meso-2,6-diaminopimeloyl-D-alanyl-D-alanine + di-trans,octa-cis-undecaprenyl phosphate = di-trans,octa-cis-undecaprenyl diphospho-N-acetyl-alpha-D-muramoyl-L-alanyl-D-glutamyl-meso-2,6-diaminopimeloyl-D-alanyl-D-alanine + UMP. It functions in the pathway cell wall biogenesis; peptidoglycan biosynthesis. In terms of biological role, catalyzes the initial step of the lipid cycle reactions in the biosynthesis of the cell wall peptidoglycan: transfers peptidoglycan precursor phospho-MurNAc-pentapeptide from UDP-MurNAc-pentapeptide onto the lipid carrier undecaprenyl phosphate, yielding undecaprenyl-pyrophosphoryl-MurNAc-pentapeptide, known as lipid I. The chain is Phospho-N-acetylmuramoyl-pentapeptide-transferase from Prochlorococcus marinus (strain MIT 9515).